We begin with the raw amino-acid sequence, 188 residues long: Peptidyl-tRNA hydrolase (188 aa).

Y14 contacts tRNA. The active-site Proton acceptor is the H19. 3 residues coordinate tRNA: Y64, N66, and N112.

The protein belongs to the PTH family. In terms of assembly, monomer.

The protein resides in the cytoplasm. The enzyme catalyses an N-acyl-L-alpha-aminoacyl-tRNA + H2O = an N-acyl-L-amino acid + a tRNA + H(+). Functionally, hydrolyzes ribosome-free peptidyl-tRNAs (with 1 or more amino acids incorporated), which drop off the ribosome during protein synthesis, or as a result of ribosome stalling. Catalyzes the release of premature peptidyl moieties from peptidyl-tRNA molecules trapped in stalled 50S ribosomal subunits, and thus maintains levels of free tRNAs and 50S ribosomes. The polypeptide is Peptidyl-tRNA hydrolase (Clostridium novyi (strain NT)).